A 569-amino-acid chain; its full sequence is MPTKIPRNDYAAMYGPTTGDRVRLADTDLIIEVERDLTTYGEEVKFGGGKVIRDGMGQSQVTRAQCAVDTVITNALIVDHSGIYKADVGLKDGRIHKIGKAGNPDTQPNVDIIIGPGTEAIAGEGRILTAGGFDAHIHFICPQQIEDSLHSGITTMLGGGTGPAHGTLATTCTPGPWHIGRMLQSLDAFPMNFGLSCKGNASQPEALVEMVSAGACAMKLHEDWGTTPGAIDCCLSVADEMDVQVMIHTDTLNESGFVENTLAAIGDRTIHAFHTEGAGGGHAPDIMKVVGYENILPSSTNPTMPYTVNTLEEHLDMLMVCHHLDKSIPEDVAFAESRIRKETIAAEDILHDMGAFSVMASDSQAMGRVGEVIIRTWQTADKMKKQRGRLAEETGDNDNARVMRYIAKYTINPALVHGMSREIGSIEEGKRADLVLWSPAFFGVKPEMSLIGGTIVMAQMGDPNASIPTPQPVYSRPMFGAFGRAVERSAVLFVSEAAQAAGIGDQLGLAKDTLAVKSTRDIRKSDMIHNSFRPDIHVDPETYDVRANGELLTCEPATDLPLAQRYFMY.

Positions 131–569 (GGFDAHIHFI…LPLAQRYFMY (439 aa)) constitute a Urease domain. Positions 136, 138, and 219 each coordinate Ni(2+). Lys-219 is subject to N6-carboxylysine. Residue His-221 participates in substrate binding. Positions 248 and 274 each coordinate Ni(2+). The active-site Proton donor is His-322. Asp-362 is a Ni(2+) binding site.

This sequence belongs to the metallo-dependent hydrolases superfamily. Urease alpha subunit family. Heterotrimer of UreA (gamma), UreB (beta) and UreC (alpha) subunits. Three heterotrimers associate to form the active enzyme. The cofactor is Ni cation. Post-translationally, carboxylation allows a single lysine to coordinate two nickel ions.

Its subcellular location is the cytoplasm. It carries out the reaction urea + 2 H2O + H(+) = hydrogencarbonate + 2 NH4(+). The protein operates within nitrogen metabolism; urea degradation; CO(2) and NH(3) from urea (urease route): step 1/1. This is Urease subunit alpha from Jannaschia sp. (strain CCS1).